The chain runs to 34 residues: uncharacterized protein (34 aa).

Positions 1–12 (MFSHFEVSENRP) are enriched in basic and acidic residues. Positions 1–21 (MFSHFEVSENRPRKQPRRKRI) are disordered.

This is an uncharacterized protein from Saccharomyces cerevisiae (strain ATCC 204508 / S288c) (Baker's yeast).